Reading from the N-terminus, the 490-residue chain is tRNA-guanine(15) transglycosylase (490 aa).

D90 functions as the Nucleophile in the catalytic mechanism. Substrate contacts are provided by D125 and A193. 3 residues coordinate Zn(2+): C276, C278, and C281.

It belongs to the archaeosine tRNA-ribosyltransferase family. Requires Zn(2+) as cofactor.

It catalyses the reaction guanosine(15) in tRNA + 7-cyano-7-deazaguanine = 7-cyano-7-carbaguanosine(15) in tRNA + guanine. The protein operates within tRNA modification; archaeosine-tRNA biosynthesis. In terms of biological role, exchanges the guanine residue with 7-cyano-7-deazaguanine (preQ0) at position 15 in the dihydrouridine loop (D-loop) of archaeal tRNAs. The chain is tRNA-guanine(15) transglycosylase from Methanosarcina barkeri (strain Fusaro / DSM 804).